The following is a 215-amino-acid chain: Thymidylate kinase (215 aa).

7–14 (GLDGSGKT) is a binding site for ATP.

Belongs to the thymidylate kinase family.

The catalysed reaction is dTMP + ATP = dTDP + ADP. Its function is as follows. Phosphorylation of dTMP to form dTDP in both de novo and salvage pathways of dTTP synthesis. This is Thymidylate kinase from Mycoplasmopsis agalactiae (strain NCTC 10123 / CIP 59.7 / PG2) (Mycoplasma agalactiae).